Consider the following 98-residue polypeptide: NADH-ubiquinone oxidoreductase chain 4L (98 aa).

3 helical membrane passes run 2–22 (PSIFINIILAFIIALLGMLIF), 37–57 (MLSMFILSTLTILSLHLTMSF), and 61–81 (ILLLVFAACEAAVGLALLVTV).

This sequence belongs to the complex I subunit 4L family. In terms of assembly, core subunit of respiratory chain NADH dehydrogenase (Complex I) which is composed of 45 different subunits.

It localises to the mitochondrion inner membrane. It catalyses the reaction a ubiquinone + NADH + 5 H(+)(in) = a ubiquinol + NAD(+) + 4 H(+)(out). Functionally, core subunit of the mitochondrial membrane respiratory chain NADH dehydrogenase (Complex I) which catalyzes electron transfer from NADH through the respiratory chain, using ubiquinone as an electron acceptor. Part of the enzyme membrane arm which is embedded in the lipid bilayer and involved in proton translocation. In Varecia rubra (Red ruffed lemur), this protein is NADH-ubiquinone oxidoreductase chain 4L (MT-ND4L).